Consider the following 312-residue polypeptide: Ribosomal RNA small subunit methyltransferase H (312 aa).

S-adenosyl-L-methionine contacts are provided by residues glycine 35 to histidine 37, aspartate 54, phenylalanine 81, aspartate 100, and glutamine 107.

The protein belongs to the methyltransferase superfamily. RsmH family.

The protein localises to the cytoplasm. It catalyses the reaction cytidine(1402) in 16S rRNA + S-adenosyl-L-methionine = N(4)-methylcytidine(1402) in 16S rRNA + S-adenosyl-L-homocysteine + H(+). Specifically methylates the N4 position of cytidine in position 1402 (C1402) of 16S rRNA. The protein is Ribosomal RNA small subunit methyltransferase H of Campylobacter jejuni subsp. jejuni serotype O:2 (strain ATCC 700819 / NCTC 11168).